A 986-amino-acid chain; its full sequence is MDNIFVPSNIYMVRTPIFSIELYNQFLKSDNIDYDLILQNDIFKESIMTTTYNLYQSIGKIDWEKDNKKTRNVKESLLKYLIRMSTRSTPYGMLSGVALGEFSENNNIKIKDSSFHKKDVKIDGQWLYKLVHYLESDYTYYKDSFVIWNQQNYIYNNRLYLDNNSSITENKRNDVLSVKYNSILVFIHENSKKNITYEELVQLISSKYSIENKEEVKVFVQELINKEIIFSDLRPTLENKNPLDYIINSLNPKNSLVGTLINISNEITKYSKMPLGKGEYKYLDIVNLMSQLFVSKNYLQIDTYIDYSRNELKQSLADNISEAAYILWLLSPNHFGTKTIRNYHEFFMDKYGFEQLVNLKQLLSDINGFGYPKKDSYSFSNNIAFLKEKYLLAIQNNSHIEITENDVKNLEKNNTVSKINAPVSTEIYSEIYFGNSIKGYEDFAVISPILGSFNAGATFGRFTGNFNIKKKNQLQKEIVHHYNNYMNENGLEISQLNEGPLNSRNVNILNNNRIYNTCLNLNLPKSDIDINDIFIGATFNKLYLYSEKHDSRIVFVSNSMFNYEFGSELYKFLREISFEKTKFIQPITEEGIDSLPFCPRIIYKNIILKPATWKINSEMFSETENWLNRFATIREKWHIPKDVIIAFGDNRLLLNLLNDKHLIILKKELKKHGRIRILESFINESNNERMLEIVTPLYKKTSLKEQSFIIPKNRNKHFNNLKDWFSIHLSIPKTYQDNFIQDYLLPFITELKVNNFINKFFYIKFKEDEDFIKLRLLREDEDYSQIYSFIKNWKDYCLLNSELYDYSIVDYVPEVYRYGGPHVIEDIENFFMYDSLLSINIIQSEFKIPKEFIVAISIDFLLDYLEINKSEKEEILINNAEDLYRSNDIREYKNLLAKLTNPKNDYEILKKEFPNLHEFLFNKISILENLKKTLQKSLYTSRSRIIGSFIHMRCNRIFGINPEKEKFVLSIFNEITKTKKYWDGCD.

This sequence to B.subtilis SpaB and L.lactis NisB.

The protein resides in the cell membrane. Functionally, involved in the post-translational modification of the lantibiotic epidermin. This is Epidermin biosynthesis protein EpiB (epiB) from Staphylococcus epidermidis.